We begin with the raw amino-acid sequence, 140 residues long: Nucleoside diphosphate kinase (140 aa).

6 residues coordinate ATP: K10, F58, R86, T92, R103, and N113. H116 acts as the Pros-phosphohistidine intermediate in catalysis.

It belongs to the NDK family. In terms of assembly, homotetramer. The cofactor is Mg(2+).

The protein resides in the cytoplasm. It carries out the reaction a 2'-deoxyribonucleoside 5'-diphosphate + ATP = a 2'-deoxyribonucleoside 5'-triphosphate + ADP. The enzyme catalyses a ribonucleoside 5'-diphosphate + ATP = a ribonucleoside 5'-triphosphate + ADP. Functionally, major role in the synthesis of nucleoside triphosphates other than ATP. The ATP gamma phosphate is transferred to the NDP beta phosphate via a ping-pong mechanism, using a phosphorylated active-site intermediate. In Anaplasma phagocytophilum (strain HZ), this protein is Nucleoside diphosphate kinase.